We begin with the raw amino-acid sequence, 224 residues long: Phosphoribosylformylglycinamidine synthase subunit PurQ (224 aa).

Residues 1 to 224 form the Glutamine amidotransferase type-1 domain; sequence MIAIIKFPGT…ILLRRLGEWA (224 aa). The Nucleophile role is filled by C84. Residues H196 and E198 contribute to the active site.

In terms of assembly, part of the FGAM synthase complex composed of 1 PurL, 1 PurQ and 2 PurS subunits.

Its subcellular location is the cytoplasm. It catalyses the reaction N(2)-formyl-N(1)-(5-phospho-beta-D-ribosyl)glycinamide + L-glutamine + ATP + H2O = 2-formamido-N(1)-(5-O-phospho-beta-D-ribosyl)acetamidine + L-glutamate + ADP + phosphate + H(+). The catalysed reaction is L-glutamine + H2O = L-glutamate + NH4(+). Its pathway is purine metabolism; IMP biosynthesis via de novo pathway; 5-amino-1-(5-phospho-D-ribosyl)imidazole from N(2)-formyl-N(1)-(5-phospho-D-ribosyl)glycinamide: step 1/2. Part of the phosphoribosylformylglycinamidine synthase complex involved in the purines biosynthetic pathway. Catalyzes the ATP-dependent conversion of formylglycinamide ribonucleotide (FGAR) and glutamine to yield formylglycinamidine ribonucleotide (FGAM) and glutamate. The FGAM synthase complex is composed of three subunits. PurQ produces an ammonia molecule by converting glutamine to glutamate. PurL transfers the ammonia molecule to FGAR to form FGAM in an ATP-dependent manner. PurS interacts with PurQ and PurL and is thought to assist in the transfer of the ammonia molecule from PurQ to PurL. This is Phosphoribosylformylglycinamidine synthase subunit PurQ from Saccharolobus solfataricus (strain ATCC 35092 / DSM 1617 / JCM 11322 / P2) (Sulfolobus solfataricus).